Reading from the N-terminus, the 200-residue chain is MANILLLDNIDSFTYNLVEQLRNQKNNVLVYRNTVSIDIIFNSLKKLTHPILMLSPGPSLPKHAGCMLDLIKKVKGDIPIVGICLGHQAIVEAYGGIIGYAGEIFHGKASLIRHDGLEMFEGVPQPLPVARYHSLICNKIPEKFVINSYFEKMIMSVRNNCDRVCGFQFHPESILTTHGDQILEKIIHWASLKYITNKKQ.

The 194-residue stretch at 3–196 folds into the Glutamine amidotransferase type-1 domain; that stretch reads NILLLDNIDS…IHWASLKYIT (194 aa). 57–59 provides a ligand contact to L-glutamine; it reads GPS. The active-site Nucleophile; for GATase activity is the Cys-84. L-glutamine is bound by residues Gln-88 and 134-135; that span reads SL. Active-site for GATase activity residues include His-170 and Glu-172.

As to quaternary structure, heterotetramer consisting of two non-identical subunits: a beta subunit (TrpG) and a large alpha subunit (TrpE).

The enzyme catalyses chorismate + L-glutamine = anthranilate + pyruvate + L-glutamate + H(+). It functions in the pathway amino-acid biosynthesis; L-tryptophan biosynthesis; L-tryptophan from chorismate: step 1/5. Functionally, part of a heterotetrameric complex that catalyzes the two-step biosynthesis of anthranilate, an intermediate in the biosynthesis of L-tryptophan. In the first step, the glutamine-binding beta subunit (TrpG) of anthranilate synthase (AS) provides the glutamine amidotransferase activity which generates ammonia as a substrate that, along with chorismate, is used in the second step, catalyzed by the large alpha subunit of AS (TrpE) to produce anthranilate. In the absence of TrpG, TrpE can synthesize anthranilate directly from chorismate and high concentrations of ammonia. The polypeptide is Anthranilate synthase component 2 (trpG) (Buchnera aphidicola subsp. Acyrthosiphon pisum (strain APS) (Acyrthosiphon pisum symbiotic bacterium)).